An 806-amino-acid polypeptide reads, in one-letter code: Glycerol-3-phosphate acyltransferase (806 aa).

The short motif at 305–310 (CHRSHM) is the HXXXXD motif element.

This sequence belongs to the GPAT/DAPAT family.

The protein resides in the cell inner membrane. The catalysed reaction is sn-glycerol 3-phosphate + an acyl-CoA = a 1-acyl-sn-glycero-3-phosphate + CoA. Its pathway is phospholipid metabolism; CDP-diacylglycerol biosynthesis; CDP-diacylglycerol from sn-glycerol 3-phosphate: step 1/3. The chain is Glycerol-3-phosphate acyltransferase from Salmonella paratyphi B (strain ATCC BAA-1250 / SPB7).